We begin with the raw amino-acid sequence, 239 residues long: Phosducin-like protein 3 (239 aa).

Methionine 1 is modified (N-acetylmethionine). Residues 32-180 (EAEEEQRILQ…EGDIKAQFIG (149 aa)) form the Phosducin domain. Phosphoserine occurs at positions 43, 234, and 236. The tract at residues 91–239 (FGEVLEISGK…MKRDSDSEGD (149 aa)) is thioredoxin fold.

This sequence belongs to the phosducin family. In terms of assembly, interacts (via thioredoxin fold region) with KDR/VEGFR2 (via juxtamembrane domain). Forms ternary complexes with the chaperonin CCT complex and actin substrate, leading to inhibition of actin folding. Interacts with XIAP (via BIR 3 and RING domain). Interacts with HSP90AA1 and HSP90AB1. In terms of processing, N-terminal methionine acetylation destabilizes the protein.

It localises to the cytoplasm. It is found in the perinuclear region. The protein localises to the endoplasmic reticulum. Acts as a chaperone for the angiogenic VEGF receptor KDR/VEGFR2, increasing its abundance by inhibiting its ubiquitination and degradation. Inhibits the folding activity of the chaperonin-containing T-complex (CCT) which leads to inhibition of cytoskeletal actin folding. Acts as a chaperone during heat shock alongside HSP90 and HSP40/70 chaperone complexes. Modulates the activation of caspases during apoptosis. The sequence is that of Phosducin-like protein 3 (PDCL3) from Pongo abelii (Sumatran orangutan).